Consider the following 90-residue polypeptide: Acylphosphatase (90 aa).

The 86-residue stretch at 5–90 (GCKVIVSGIV…YQKTNDFIAC (86 aa)) folds into the Acylphosphatase-like domain. Active-site residues include Arg20 and Asn38.

This sequence belongs to the acylphosphatase family.

The enzyme catalyses an acyl phosphate + H2O = a carboxylate + phosphate + H(+). The sequence is that of Acylphosphatase (acyP) from Psychromonas ingrahamii (strain DSM 17664 / CCUG 51855 / 37).